The chain runs to 1178 residues: Dual specificity mitogen-activated protein kinase kinase hemipterous (1178 aa).

Disordered stretches follow at residues Ser-74–Ser-103 and Ala-115–Leu-148. 2 stretches are compositionally biased toward low complexity: residues Ala-91–Ser-103 and Ala-115–Thr-128. Positions Leu-197–Ile-456 constitute a Protein kinase domain. ATP is bound by residues Leu-203–Val-211 and Lys-226. Asp-320 acts as the Proton acceptor in catalysis. Position 348 is a phosphoserine (Ser-348). Thr-352 carries the post-translational modification Phosphothreonine. Positions Thr-522 to Phe-648 are disordered. A compositionally biased stretch (polar residues) spans Tyr-523–Tyr-543. The segment covering Gln-544 to Thr-570 has biased composition (low complexity). A compositionally biased stretch (gly residues) spans Gly-574 to Ser-593. Residues Gly-594 to Gly-608 are compositionally biased toward low complexity. A compositionally biased stretch (basic and acidic residues) spans Lys-636–Ser-646. 2 positions are modified to phosphoserine: Ser-646 and Ser-662. 6 disordered regions span residues Thr-715 to Gly-783, Gln-797 to Ser-851, Gly-912 to Asn-933, Thr-999 to Asn-1026, Ser-1042 to Gln-1108, and Gly-1122 to Gln-1178. The span at Thr-724–Asp-734 shows a compositional bias: polar residues. Composition is skewed to low complexity over residues Ser-735 to Gly-783, Arg-808 to Pro-817, and Thr-837 to Ser-851. A compositionally biased stretch (polar residues) spans Gly-912–Tyr-928. Residues Ser-1042–Thr-1055 show a composition bias toward low complexity. Phosphoserine occurs at positions 1150 and 1154. Residues Pro-1168–Gln-1178 show a composition bias toward basic and acidic residues.

It belongs to the protein kinase superfamily. STE Ser/Thr protein kinase family. MAP kinase kinase subfamily. Post-translationally, MAPKK is itself dependent on Ser/Thr phosphorylation for activity catalyzed by MAP kinase kinase kinases. In terms of processing, weakly autophosphorylated.

It catalyses the reaction L-seryl-[protein] + ATP = O-phospho-L-seryl-[protein] + ADP + H(+). The enzyme catalyses L-threonyl-[protein] + ATP = O-phospho-L-threonyl-[protein] + ADP + H(+). The catalysed reaction is L-tyrosyl-[protein] + ATP = O-phospho-L-tyrosyl-[protein] + ADP + H(+). Required for the epithelial cell sheet movement called dorsal closure (DC), which allows establishment of the dorsal epidermis. Controls the expression in the dorsal epithelium edges of another dorsal closure gene, puckered (puc). Phosphorylates and activates the MAP kinase bsk; bsk signal transduction pathway mediates an immune response and morphogenesis. This is Dual specificity mitogen-activated protein kinase kinase hemipterous (hep) from Drosophila melanogaster (Fruit fly).